A 73-amino-acid chain; its full sequence is Large ribosomal subunit protein uL29 (73 aa).

This sequence belongs to the universal ribosomal protein uL29 family.

The protein is Large ribosomal subunit protein uL29 (rpmC) of Aquifex aeolicus (strain VF5).